A 24-amino-acid polypeptide reads, in one-letter code: Lectin (24 aa).

The protein belongs to the leguminous lectin family. In terms of assembly, homotetramer.

Functionally, agglutinates erythrocytes of blood group A. Binds in decreasing order of affinity: N-acetyl-D-galactosamine, D-galactose, and D-galactosamine. In Crotalaria pallida (Smooth rattlebox), this protein is Lectin.